The chain runs to 232 residues: Large ribosomal subunit protein uL1 (232 aa).

It belongs to the universal ribosomal protein uL1 family. Part of the 50S ribosomal subunit.

Binds directly to 23S rRNA. The L1 stalk is quite mobile in the ribosome, and is involved in E site tRNA release. Its function is as follows. Protein L1 is also a translational repressor protein, it controls the translation of the L11 operon by binding to its mRNA. The polypeptide is Large ribosomal subunit protein uL1 (Sinorhizobium fredii (strain NBRC 101917 / NGR234)).